The sequence spans 279 residues: Large ribosomal subunit protein uL2 (279 aa).

Disordered stretches follow at residues 29 to 59 and 224 to 279; these read PEKS…GGHK and VAMN…KNKR. Residues 50 to 59 are compositionally biased toward basic residues; that stretch reads TTRHKGGGHK. Residues 253–268 are compositionally biased toward basic and acidic residues; sequence PEGRTRRPNKESDKLI. A compositionally biased stretch (basic residues) spans 269–279; that stretch reads VRRRRTGKNKR.

It belongs to the universal ribosomal protein uL2 family. As to quaternary structure, part of the 50S ribosomal subunit. Forms a bridge to the 30S subunit in the 70S ribosome.

One of the primary rRNA binding proteins. Required for association of the 30S and 50S subunits to form the 70S ribosome, for tRNA binding and peptide bond formation. It has been suggested to have peptidyltransferase activity; this is somewhat controversial. Makes several contacts with the 16S rRNA in the 70S ribosome. The polypeptide is Large ribosomal subunit protein uL2 (Paenarthrobacter aurescens (strain TC1)).